Consider the following 199-residue polypeptide: Shikimate kinase (199 aa).

Gly-32–Ser-37 contributes to the ATP binding site. Thr-36 provides a ligand contact to Mg(2+). The substrate site is built by Asp-54, Arg-78, and Gly-100. Arg-138 provides a ligand contact to ATP. Arg-157 is a substrate binding site.

The protein belongs to the shikimate kinase family. In terms of assembly, monomer. It depends on Mg(2+) as a cofactor.

It localises to the cytoplasm. It carries out the reaction shikimate + ATP = 3-phosphoshikimate + ADP + H(+). The protein operates within metabolic intermediate biosynthesis; chorismate biosynthesis; chorismate from D-erythrose 4-phosphate and phosphoenolpyruvate: step 5/7. In terms of biological role, catalyzes the specific phosphorylation of the 3-hydroxyl group of shikimic acid using ATP as a cosubstrate. This Synechococcus sp. (strain CC9605) protein is Shikimate kinase.